Here is a 75-residue protein sequence, read N- to C-terminus: Holin (75 aa).

2 consecutive transmembrane segments (helical) span residues 16 to 36 and 39 to 59; these read FAQAMIGALGAGATGLIGVDW and ALSIAGFATVVSILTSLASGI.

Homomultimer.

The protein resides in the host cell inner membrane. Its function is as follows. Accumulates harmlessly in the cytoplasmic membrane until it reaches a critical concentration that triggers the formation of micron-scale pores (holes) causing host cell membrane disruption and endolysin escape into the periplasmic space. Determines the precise timing of host cell lysis. Participates with the endolysin protein in the sequential events which lead to the programmed host cell lysis releasing the mature viral particles from the host cell. The chain is Holin from Lactococcus lactis subsp. cremoris (Streptococcus cremoris).